Reading from the N-terminus, the 472-residue chain is Flotillin-like protein 6 (472 aa).

Residue Cys37 is the site of S-palmitoyl cysteine attachment. Residues 237 to 327 (ENQREAEVAQ…ELYKKQKEAE (91 aa)) are a coiled coil.

This sequence belongs to the band 7/mec-2 family. Flotillin subfamily. May be palmitoylated. As to expression, very low occasional expression in roots and nodules.

The protein resides in the cell membrane. Its subcellular location is the membrane. The protein localises to the caveola. May act as a scaffolding protein within caveolar membranes, functionally participating in formation of caveolae or caveolae-like vesicles. May be involved in nodule formation. This chain is Flotillin-like protein 6 (FLOT6), found in Medicago truncatula (Barrel medic).